Here is a 172-residue protein sequence, read N- to C-terminus: Large ribosomal subunit protein uL11m (172 aa).

This sequence belongs to the universal ribosomal protein uL11 family.

The protein localises to the mitochondrion. The sequence is that of Large ribosomal subunit protein uL11m (mrpl11) from Dictyostelium discoideum (Social amoeba).